We begin with the raw amino-acid sequence, 267 residues long: Phosphate import ATP-binding protein PstB 2 (267 aa).

Positions 21–262 constitute an ABC transporter domain; that stretch reads LATKDLHVYY…AQCQSTNDYV (242 aa). 53–60 serves as a coordination point for ATP; that stretch reads GPSGCGKS.

This sequence belongs to the ABC transporter superfamily. Phosphate importer (TC 3.A.1.7) family. As to quaternary structure, the complex is composed of two ATP-binding proteins (PstB), two transmembrane proteins (PstC and PstA) and a solute-binding protein (PstS).

It is found in the cell membrane. The catalysed reaction is phosphate(out) + ATP + H2O = ADP + 2 phosphate(in) + H(+). Its function is as follows. Part of the ABC transporter complex PstSACB involved in phosphate import. Responsible for energy coupling to the transport system. This Streptococcus pyogenes serotype M1 protein is Phosphate import ATP-binding protein PstB 2.